Reading from the N-terminus, the 103-residue chain is Large ribosomal subunit protein eL14 (103 aa).

Belongs to the eukaryotic ribosomal protein eL14 family.

This Pyrobaculum neutrophilum (strain DSM 2338 / JCM 9278 / NBRC 100436 / V24Sta) (Thermoproteus neutrophilus) protein is Large ribosomal subunit protein eL14.